A 148-amino-acid polypeptide reads, in one-letter code: Large ribosomal subunit protein eL19 (148 aa).

The span at Lys-52–Gly-76 shows a compositional bias: basic residues. The disordered stretch occupies residues Lys-52–Met-95.

This sequence belongs to the eukaryotic ribosomal protein eL19 family. As to quaternary structure, part of the 50S ribosomal subunit.

Functionally, binds to the 23S rRNA. The chain is Large ribosomal subunit protein eL19 from Methanothermobacter thermautotrophicus (strain ATCC 29096 / DSM 1053 / JCM 10044 / NBRC 100330 / Delta H) (Methanobacterium thermoautotrophicum).